The sequence spans 161 residues: Transcriptional repressor NrdR (161 aa).

Over residues Met1–Thr11 the composition is skewed to polar residues. Positions Met1–Glu20 are disordered. A zinc finger lies at Cys3 to Cys34. Residues Leu49–Asp139 form the ATP-cone domain.

Belongs to the NrdR family. The cofactor is Zn(2+).

Its function is as follows. Negatively regulates transcription of bacterial ribonucleotide reductase nrd genes and operons by binding to NrdR-boxes. This is Transcriptional repressor NrdR from Rhodopseudomonas palustris (strain BisB18).